A 315-amino-acid polypeptide reads, in one-letter code: DNA-directed RNA polymerase subunit alpha (315 aa).

Positions 1–228 (MLEIEKPKIE…EHFKLFMTLT (228 aa)) are alpha N-terminal domain (alpha-NTD). The alpha C-terminal domain (alpha-CTD) stretch occupies residues 245–315 (KEKVLEMTIE…LGLSLKLNDE (71 aa)).

This sequence belongs to the RNA polymerase alpha chain family. As to quaternary structure, homodimer. The RNAP catalytic core consists of 2 alpha, 1 beta, 1 beta' and 1 omega subunit. When a sigma factor is associated with the core the holoenzyme is formed, which can initiate transcription.

It carries out the reaction RNA(n) + a ribonucleoside 5'-triphosphate = RNA(n+1) + diphosphate. Functionally, DNA-dependent RNA polymerase catalyzes the transcription of DNA into RNA using the four ribonucleoside triphosphates as substrates. The chain is DNA-directed RNA polymerase subunit alpha from Clostridium acetobutylicum (strain ATCC 824 / DSM 792 / JCM 1419 / IAM 19013 / LMG 5710 / NBRC 13948 / NRRL B-527 / VKM B-1787 / 2291 / W).